A 490-amino-acid polypeptide reads, in one-letter code: Xylulose kinase (490 aa).

Substrate-binding residues include H99, R170, D280, and N281. ATP-binding positions include W355, G441–A442, and N445.

The protein belongs to the FGGY kinase family. Monomer.

It carries out the reaction D-xylulose + ATP = D-xylulose 5-phosphate + ADP + H(+). Its function is as follows. Phosphorylates D-xylulose to produce D-xylulose 5-phosphate, a molecule that may play an important role in the regulation of glucose metabolism and lipogenesis. This Bos taurus (Bovine) protein is Xylulose kinase (XYLB).